The primary structure comprises 845 residues: Dynein axonemal assembly factor 5 (845 aa).

HEAT repeat units follow at residues 47–84, 138–175, 180–217, 260–297, 332–369, 523–561, 674–715, and 766–803; these read DVFDKLYLHLLKCYEDRFESVRSKAIQVVSAFLSSLPP, ECYPLVVKILIKSIKDDYPVVQREGCSAVVTLSRLADT, PFTESILLPLYTMLNHKHAQARISAIQAIARLSLHMDA, SFFERILPLVLCCLKDESPEVLNHIYPQWLKCGIQYFN, QRSLRLLQLITRETSDWKDNVRLHALKLLYQFVLHAEA, NFGQTLIEKMVKLLNTSVPKIHERWFHLALQDVINLDAA, SESV…MSVE, and AIVKRAMDLLLLYHESPEKDMRAAVAVTLKVLAKSHPE.

The protein belongs to the DNAAF5 family. Expressed in testis.

It localises to the cytoplasm. Its subcellular location is the dynein axonemal particle. Its function is as follows. Cytoplasmic protein involved in the delivery of the dynein machinery to the motile cilium. It is required for the assembly of the axonemal dynein inner and outer arms, two structures attached to the peripheral outer doublet A microtubule of the axoneme, that play a crucial role in cilium motility. The protein is Dynein axonemal assembly factor 5 of Drosophila melanogaster (Fruit fly).